Reading from the N-terminus, the 362-residue chain is Adenosine deaminase (362 aa).

Positions 19 and 21 each coordinate Zn(2+). Residues H21, D23, and G181 each contribute to the substrate site. H208 lines the Zn(2+) pocket. The active-site Proton donor is E211. D300 is a Zn(2+) binding site.

Belongs to the metallo-dependent hydrolases superfamily. Adenosine and AMP deaminases family. Adenosine deaminase subfamily. It depends on Zn(2+) as a cofactor.

It carries out the reaction adenosine + H2O + H(+) = inosine + NH4(+). The enzyme catalyses 2'-deoxyadenosine + H2O + H(+) = 2'-deoxyinosine + NH4(+). Functionally, catalyzes the hydrolytic deamination of adenosine and 2-deoxyadenosine. The chain is Adenosine deaminase from Mycobacterium marinum (strain ATCC BAA-535 / M).